We begin with the raw amino-acid sequence, 216 residues long: Pentapeptide repeat protein VPA0095 (216 aa).

The protein belongs to the pentapeptide repeat protein family.

Has no effect when overexpressed in E.coli. When Cys-115 is mutated to Tyr and overexpressed it increases (fluoro)quinolone resistance in E.coli up to 16-fold for ciprofloxacin, levofloxacin and nalidixic acid. This chain is Pentapeptide repeat protein VPA0095, found in Vibrio parahaemolyticus serotype O3:K6 (strain RIMD 2210633).